A 938-amino-acid chain; its full sequence is Isoleucine--tRNA ligase (938 aa).

Residues 58–68 (PYANGSIHIGH) carry the 'HIGH' region motif. The residue at position 183 (K183) is an N6-acetyllysine. Residue E561 participates in L-isoleucyl-5'-AMP binding. Positions 602–606 (KMSKS) match the 'KMSKS' region motif. Residue K605 participates in ATP binding. Positions 901, 904, 921, and 924 each coordinate Zn(2+).

This sequence belongs to the class-I aminoacyl-tRNA synthetase family. IleS type 1 subfamily. Monomer. The cofactor is Zn(2+).

The protein localises to the cytoplasm. The enzyme catalyses tRNA(Ile) + L-isoleucine + ATP = L-isoleucyl-tRNA(Ile) + AMP + diphosphate. Catalyzes the attachment of isoleucine to tRNA(Ile). As IleRS can inadvertently accommodate and process structurally similar amino acids such as valine, to avoid such errors it has two additional distinct tRNA(Ile)-dependent editing activities. One activity is designated as 'pretransfer' editing and involves the hydrolysis of activated Val-AMP. The other activity is designated 'posttransfer' editing and involves deacylation of mischarged Val-tRNA(Ile). The protein is Isoleucine--tRNA ligase of Escherichia coli O7:K1 (strain IAI39 / ExPEC).